The primary structure comprises 448 residues: Clusterin (448 aa).

The signal sequence occupies residues 1-21 (MKILLLCVALLLIWDNGMVLG). Positions 77–80 (KKKK) match the Nuclear localization signal motif. 5 disulfides stabilise this stretch: cysteine 101/cysteine 312, cysteine 112/cysteine 304, cysteine 115/cysteine 301, cysteine 120/cysteine 294, and cysteine 128/cysteine 284. Residue asparagine 102 is glycosylated (N-linked (GlcNAc...) asparagine). Serine 132 carries the phosphoserine modification. N-linked (GlcNAc...) asparagine glycosylation is found at asparagine 144, asparagine 290, asparagine 327, asparagine 353, and asparagine 373. At serine 395 the chain carries Phosphoserine. Residues 442-446 (RRKSR) carry the Nuclear localization signal motif.

The protein belongs to the clusterin family. As to quaternary structure, antiparallel disulfide-linked heterodimer of an alpha chain and a beta chain. Self-associates and forms higher oligomers. Interacts with a broad range of misfolded proteins, including APP, APOC2 and LYZ. Slightly acidic pH promotes interaction with misfolded proteins. Forms high-molecular weight oligomers upon interaction with misfolded proteins. Interacts with APOA1, LRP2, CLUAP1 and PON1. Interacts with the complement membrane attack complex. Interacts (via alpha chain) with XRCC6. Interacts with SYVN1, COMMD1, BTRC, CUL1 and with ubiquitin and SCF (SKP1-CUL1-F-box protein) E3 ubiquitin-protein ligase complexes. Interacts (via alpha chain) with BAX in stressed cells, where BAX undergoes a conformation change leading to association with the mitochondrial membrane. Does not interact with BAX in unstressed cells. Found in a complex with LTF, CLU, EPPIN and SEMG1. Interacts (immaturely glycosylated pre-secreted form) with HSPA5; this interaction promotes CLU stability and facilitates stress-induced CLU retrotranslocation from the secretory pathway to the mitochondria, thereby reducing stress-induced apoptosis by stabilizing mitochondrial membrane integrity. Interacts with BCL2L1; this interaction releases and activates BAX and promotes cell death. Interacts with TGFBR2 and ACVR1. Interacts (secreted form) with STMN3; this interaction may act as an important modulator during neuronal differentiation. Interacts with VLDLR and LRP8. Post-translationally, proteolytically cleaved on its way through the secretory system, probably within the Golgi lumen. Proteolytic cleavage is not necessary for its chaperone activity. All non-secreted forms are not proteolytically cleaved. Chaperone activity of uncleaved forms is dependent on a non-reducing environment. Polyubiquitinated, leading to proteasomal degradation. Under cellular stress, the intracellular level of cleaved form is reduced due to proteasomal degradation. In terms of processing, extensively glycosylated with sulfated N-linked carbohydrates. About 30% of the protein mass is comprised of complex N-linked carbohydrate. Endoplasmic reticulum (ER) stress induces changes in glycosylation status and increases level of hypoglycosylated forms. Core carbohydrates are essential for chaperone activity. Non-secreted forms are hypoglycosylated or unglycosylated. In terms of tissue distribution, most abundant in stomach, liver, brain, and testis, with intermediate levels in heart, ovary and kidney.

The protein localises to the secreted. Its subcellular location is the nucleus. The protein resides in the cytoplasm. It is found in the mitochondrion membrane. It localises to the cytosol. The protein localises to the microsome. Its subcellular location is the endoplasmic reticulum. The protein resides in the mitochondrion. It is found in the perinuclear region. It localises to the cytoplasmic vesicle. The protein localises to the secretory vesicle. Its subcellular location is the chromaffin granule. Its function is as follows. Functions as extracellular chaperone that prevents aggregation of non native proteins. Prevents stress-induced aggregation of blood plasma proteins. Inhibits formation of amyloid fibrils by APP, APOC2, B2M, CALCA, CSN3, SNCA and aggregation-prone LYZ variants (in vitro). Does not require ATP. Maintains partially unfolded proteins in a state appropriate for subsequent refolding by other chaperones, such as HSPA8/HSC70. Does not refold proteins by itself. Binding to cell surface receptors triggers internalization of the chaperone-client complex and subsequent lysosomal or proteasomal degradation. When secreted, protects cells against apoptosis and against cytolysis by complement: inhibits assembly of the complement membrane attack complex (MAC) by preventing polymerization of C9 pore component of the MAC complex. Intracellular forms interact with ubiquitin and SCF (SKP1-CUL1-F-box protein) E3 ubiquitin-protein ligase complexes and promote the ubiquitination and subsequent proteasomal degradation of target proteins. Promotes proteasomal degradation of COMMD1 and IKBKB. Modulates NF-kappa-B transcriptional activity. Following stress, promotes apoptosis. Inhibits apoptosis when associated with the mitochondrial membrane by interference with BAX-dependent release of cytochrome c into the cytoplasm. Plays a role in the regulation of cell proliferation. Following ER stress, suppresses stress-induced apoptosis by stabilizing mitochondrial membrane integrity through interaction with HSPA5. When secreted, does not affect caspase or BAX-mediated intrinsic apoptosis and TNF-induced NF-kappa-B-activity. When secreted, acts as an important modulator during neuronal differentiation through interaction with STMN3. Plays a role in the clearance of immune complexes that arise during cell injury. The polypeptide is Clusterin (Mus musculus (Mouse)).